Here is a 172-residue protein sequence, read N- to C-terminus: Adenine phosphoribosyltransferase (172 aa).

The protein belongs to the purine/pyrimidine phosphoribosyltransferase family. In terms of assembly, homodimer.

The protein localises to the cytoplasm. The enzyme catalyses AMP + diphosphate = 5-phospho-alpha-D-ribose 1-diphosphate + adenine. It functions in the pathway purine metabolism; AMP biosynthesis via salvage pathway; AMP from adenine: step 1/1. In terms of biological role, catalyzes a salvage reaction resulting in the formation of AMP, that is energically less costly than de novo synthesis. The protein is Adenine phosphoribosyltransferase of Pediococcus pentosaceus (strain ATCC 25745 / CCUG 21536 / LMG 10740 / 183-1w).